Consider the following 97-residue polypeptide: Large ribosomal subunit protein eL21 (97 aa).

The tract at residues 1–24 is disordered; it reads MQKSEGFRSKTRYKLQKHPRQKGM. Residues 9–21 show a composition bias toward basic residues; it reads SKTRYKLQKHPRQ.

The protein belongs to the eukaryotic ribosomal protein eL21 family.

This chain is Large ribosomal subunit protein eL21, found in Methanococcus maripaludis (strain DSM 14266 / JCM 13030 / NBRC 101832 / S2 / LL).